Consider the following 155-residue polypeptide: Chaperone protein IpgC (155 aa).

Belongs to the LcrH/SycD chaperone family.

It localises to the cytoplasm. Assists the correct folding of nascent IpaB. Once it is bound to IpaB, it binds to IpaC and impedes their premature association that would lead to their degradation in the absence of IpcG. The protein is Chaperone protein IpgC (ipgC) of Shigella dysenteriae.